The primary structure comprises 289 residues: Paired box protein 5 homolog (289 aa).

The segment at residues 29–155 is a DNA-binding region (paired); it reads SHTGVNQLGG…SSINRIVRNK (127 aa). The PAI subdomain stretch occupies residues 32-88; sequence GVNQLGGVFVNGRPLADTVRAQIVEMSQHGTRPCDISRQLKVSHGCVSKILGRYYST. An RED subdomain region spans residues 107 to 155; the sequence is RVVECIAGYKRANPTMFAWEIRQKLIEDQICGEENVPSVSSINRIVRNK. 2 stretches are compositionally biased toward low complexity: residues 166–179 and 189–198; these read SVTS…SATS and VQQHMQQSTS. The segment at 166–198 is disordered; the sequence is SVTSSAARPSSATSHHQRSPPRGVQQHMQQSTS.

The protein resides in the nucleus. Its subcellular location is the chromosome. Functionally, transcription factor. Binds to specific DNA sequence motifs in regulatory elements, for example in the genes encoding transcription factor lin-48, apoptosis regulator ced-9 and neuropeptide-like protein nlp-2. Specifies cell fate, playing an essential role in embryonic and larval development. Involved in morphogenesis of the vulva and uterus in hermaphrodites and of the rectal epithelium of the tail in males. Plays multiple roles in the development of the egg-laying system, acting in both lin-3/EGF-pathway-dependent and -independent processes. Positively regulates expression of neuropeptide-like proteins nlp-2 and nlp-7 in uvl cells in an EGF-pathway-dependent manner. Involved in negatively modulating apoptosis in germline and somatic cells, acting in partial redundancy with transcription factor pax-2, probably by directly regulating transcription of ced-9. Positively regulates transcription of lin-48 in hindgut cells and functions in the development of the hindgut. This chain is Paired box protein 5 homolog, found in Caenorhabditis elegans.